We begin with the raw amino-acid sequence, 101 residues long: NADH-quinone oxidoreductase subunit K (101 aa).

3 helical membrane-spanning segments follow: residues 2–22 (TLSA…YGAL), 28–48 (VIVL…FVAF), and 62–82 (FALF…AALI).

The protein belongs to the complex I subunit 4L family. As to quaternary structure, NDH-1 is composed of 14 different subunits. Subunits NuoA, H, J, K, L, M, N constitute the membrane sector of the complex.

Its subcellular location is the cell membrane. It catalyses the reaction a quinone + NADH + 5 H(+)(in) = a quinol + NAD(+) + 4 H(+)(out). In terms of biological role, NDH-1 shuttles electrons from NADH, via FMN and iron-sulfur (Fe-S) centers, to quinones in the respiratory chain. The immediate electron acceptor for the enzyme in this species is believed to be a menaquinone. Couples the redox reaction to proton translocation (for every two electrons transferred, four hydrogen ions are translocated across the cytoplasmic membrane), and thus conserves the redox energy in a proton gradient. This Geobacillus kaustophilus (strain HTA426) protein is NADH-quinone oxidoreductase subunit K.